Here is a 272-residue protein sequence, read N- to C-terminus: HMP-PP phosphatase (272 aa).

The Nucleophile role is filled by Asp-8. Mg(2+) is bound by residues Asp-8, Asp-10, and Asp-212.

It belongs to the HAD-like hydrolase superfamily. Cof family. Requires Mg(2+) as cofactor.

It catalyses the reaction 4-amino-2-methyl-5-(diphosphooxymethyl)pyrimidine + H2O = 4-amino-2-methyl-5-(phosphooxymethyl)pyrimidine + phosphate + H(+). Catalyzes the hydrolysis of 4-amino-2-methyl-5-hydroxymethylpyrimidine pyrophosphate (HMP-PP) to 4-amino-2-methyl-5-hydroxymethylpyrimidine phosphate (HMP-P). This is HMP-PP phosphatase from Salmonella arizonae (strain ATCC BAA-731 / CDC346-86 / RSK2980).